The sequence spans 327 residues: Urease accessory protein UreD (327 aa).

It belongs to the UreD family. As to quaternary structure, ureD, UreF and UreG form a complex that acts as a GTP-hydrolysis-dependent molecular chaperone, activating the urease apoprotein by helping to assemble the nickel containing metallocenter of UreC. The UreE protein probably delivers the nickel.

The protein resides in the cytoplasm. Functionally, required for maturation of urease via the functional incorporation of the urease nickel metallocenter. The chain is Urease accessory protein UreD from Yersinia enterocolitica serotype O:8 / biotype 1B (strain NCTC 13174 / 8081).